A 208-amino-acid chain; its full sequence is Imidazole glycerol phosphate synthase subunit HisH (208 aa).

Residues Met1–Ser206 enclose the Glutamine amidotransferase type-1 domain. The active-site Nucleophile is the Cys79. Residues His181 and Glu183 contribute to the active site.

In terms of assembly, heterodimer of HisH and HisF.

The protein resides in the cytoplasm. It catalyses the reaction 5-[(5-phospho-1-deoxy-D-ribulos-1-ylimino)methylamino]-1-(5-phospho-beta-D-ribosyl)imidazole-4-carboxamide + L-glutamine = D-erythro-1-(imidazol-4-yl)glycerol 3-phosphate + 5-amino-1-(5-phospho-beta-D-ribosyl)imidazole-4-carboxamide + L-glutamate + H(+). It carries out the reaction L-glutamine + H2O = L-glutamate + NH4(+). Its pathway is amino-acid biosynthesis; L-histidine biosynthesis; L-histidine from 5-phospho-alpha-D-ribose 1-diphosphate: step 5/9. Its function is as follows. IGPS catalyzes the conversion of PRFAR and glutamine to IGP, AICAR and glutamate. The HisH subunit catalyzes the hydrolysis of glutamine to glutamate and ammonia as part of the synthesis of IGP and AICAR. The resulting ammonia molecule is channeled to the active site of HisF. The polypeptide is Imidazole glycerol phosphate synthase subunit HisH (Listeria monocytogenes serotype 4b (strain CLIP80459)).